Here is a 156-residue protein sequence, read N- to C-terminus: Arginine repressor (156 aa).

The protein belongs to the ArgR family.

The protein localises to the cytoplasm. It participates in amino-acid biosynthesis; L-arginine biosynthesis [regulation]. Its function is as follows. Regulates arginine biosynthesis genes. This Pectobacterium atrosepticum (strain SCRI 1043 / ATCC BAA-672) (Erwinia carotovora subsp. atroseptica) protein is Arginine repressor.